Consider the following 107-residue polypeptide: LSSQVTQELTALMDETMKELKAYKSELEEQLSPVAEETRARLSKELQAAQARLGADMEDVRSRLAQYRSEVQAMLGQSTDELRARLASHLRKLRKRLLRDVDDLQKR.

5 consecutive repeat copies span residues 11-32 (ALMDETMKELKAYKSELEEQLS), 33-54 (PVAEETRARLSKELQAAQARLG), 55-76 (ADMEDVRSRLAQYRSEVQAMLG), 77-98 (QSTDELRARLASHLRKLRKRLL), and 99-107 (RDVDDLQKR). Residues 11–107 (ALMDETMKEL…LRDVDDLQKR (97 aa)) are 5 X 22 AA approximate tandem repeats. Residue M74 is modified to Methionine sulfoxide. The residue at position 78 (S78) is a Phosphoserine. The segment at 89–99 (HLRKLRKRLLR) is LDL and other lipoprotein receptors binding. Residue 93-96 (LRKR) coordinates heparin.

Belongs to the apolipoprotein A1/A4/E family. As to quaternary structure, homotetramer. May interact with ABCA1; functionally associated with ABCA1 in the biogenesis of HDLs. May interact with APP/A4 amyloid-beta peptide; the interaction is extremely stable in vitro but its physiological significance is unclear. May interact with MAPT. May interact with MAP2. In the cerebrospinal fluid, interacts with secreted SORL1. Interacts with PMEL; this allows the loading of PMEL luminal fragment on ILVs to induce fibril nucleation. Post-translationally, APOE exists as multiple glycosylated and sialylated glycoforms within cells and in plasma. The extent of glycosylation and sialylation are tissue and context specific. In terms of processing, glycated in plasma VLDL. Phosphorylated by FAM20C in the extracellular medium.

It localises to the secreted. It is found in the extracellular space. The protein localises to the extracellular matrix. The protein resides in the extracellular vesicle. Its subcellular location is the endosome. It localises to the multivesicular body. In terms of biological role, APOE is an apolipoprotein, a protein associating with lipid particles, that mainly functions in lipoprotein-mediated lipid transport between organs via the plasma and interstitial fluids. APOE is a core component of plasma lipoproteins and is involved in their production, conversion and clearance. Apolipoproteins are amphipathic molecules that interact both with lipids of the lipoprotein particle core and the aqueous environment of the plasma. As such, APOE associates with chylomicrons, chylomicron remnants, very low density lipoproteins (VLDL) and intermediate density lipoproteins (IDL) but shows a preferential binding to high-density lipoproteins (HDL). It also binds a wide range of cellular receptors including the LDL receptor/LDLR, the LDL receptor-related proteins LRP1, LRP2 and LRP8 and the very low-density lipoprotein receptor/VLDLR that mediate the cellular uptake of the APOE-containing lipoprotein particles. Finally, APOE also has a heparin-binding activity and binds heparan-sulfate proteoglycans on the surface of cells, a property that supports the capture and the receptor-mediated uptake of APOE-containing lipoproteins by cells. A main function of APOE is to mediate lipoprotein clearance through the uptake of chylomicrons, VLDLs, and HDLs by hepatocytes. APOE is also involved in the biosynthesis by the liver of VLDLs as well as their uptake by peripheral tissues ensuring the delivery of triglycerides and energy storage in muscle, heart and adipose tissues. By participating in the lipoprotein-mediated distribution of lipids among tissues, APOE plays a critical role in plasma and tissues lipid homeostasis. APOE is also involved in two steps of reverse cholesterol transport, the HDLs-mediated transport of cholesterol from peripheral tissues to the liver, and thereby plays an important role in cholesterol homeostasis. First, it is functionally associated with ABCA1 in the biogenesis of HDLs in tissues. Second, it is enriched in circulating HDLs and mediates their uptake by hepatocytes. APOE also plays an important role in lipid transport in the central nervous system, regulating neuron survival and sprouting. The sequence is that of Apolipoprotein E (APOE) from Saimiri sciureus (Common squirrel monkey).